Consider the following 317-residue polypeptide: Methionyl-tRNA formyltransferase (317 aa).

(6S)-5,6,7,8-tetrahydrofolate is bound at residue 112–115; it reads SLLP.

Belongs to the Fmt family.

The catalysed reaction is L-methionyl-tRNA(fMet) + (6R)-10-formyltetrahydrofolate = N-formyl-L-methionyl-tRNA(fMet) + (6S)-5,6,7,8-tetrahydrofolate + H(+). In terms of biological role, attaches a formyl group to the free amino group of methionyl-tRNA(fMet). The formyl group appears to play a dual role in the initiator identity of N-formylmethionyl-tRNA by promoting its recognition by IF2 and preventing the misappropriation of this tRNA by the elongation apparatus. The chain is Methionyl-tRNA formyltransferase from Histophilus somni (strain 2336) (Haemophilus somnus).